A 370-amino-acid chain; its full sequence is Queuine tRNA-ribosyltransferase (370 aa).

The Proton acceptor role is filled by D93. Residues 93–97 (DSGGF), D147, Q189, and G216 each bind substrate. The tract at residues 247 to 253 (GVGSPDC) is RNA binding. Residue D266 is the Nucleophile of the active site. The RNA binding; important for wobble base 34 recognition stretch occupies residues 271-275 (TRIAR). Zn(2+) contacts are provided by C304, C306, C309, and H335.

This sequence belongs to the queuine tRNA-ribosyltransferase family. As to quaternary structure, homodimer. Within each dimer, one monomer is responsible for RNA recognition and catalysis, while the other monomer binds to the replacement base PreQ1. Requires Zn(2+) as cofactor.

It carries out the reaction 7-aminomethyl-7-carbaguanine + guanosine(34) in tRNA = 7-aminomethyl-7-carbaguanosine(34) in tRNA + guanine. The protein operates within tRNA modification; tRNA-queuosine biosynthesis. Catalyzes the base-exchange of a guanine (G) residue with the queuine precursor 7-aminomethyl-7-deazaguanine (PreQ1) at position 34 (anticodon wobble position) in tRNAs with GU(N) anticodons (tRNA-Asp, -Asn, -His and -Tyr). Catalysis occurs through a double-displacement mechanism. The nucleophile active site attacks the C1' of nucleotide 34 to detach the guanine base from the RNA, forming a covalent enzyme-RNA intermediate. The proton acceptor active site deprotonates the incoming PreQ1, allowing a nucleophilic attack on the C1' of the ribose to form the product. After dissociation, two additional enzymatic reactions on the tRNA convert PreQ1 to queuine (Q), resulting in the hypermodified nucleoside queuosine (7-(((4,5-cis-dihydroxy-2-cyclopenten-1-yl)amino)methyl)-7-deazaguanosine). This chain is Queuine tRNA-ribosyltransferase, found in Pelotomaculum thermopropionicum (strain DSM 13744 / JCM 10971 / SI).